We begin with the raw amino-acid sequence, 501 residues long: MLGVVGVLLLVAFATLLLWDFLWRRRGNGILPGPRPLPFLGNLLMYRGLDPEQIMDFVKKNQRKYGRLYRVWILHQLAVFSTDPRDIEFVLSSQQHITKNNLYKLLNCWLGDGLLMSTGRKWHGRRKIITPTFHFKILEQFVEIFDQQSAVMVEQLQSRADGKTPINIFPVICLTALDIIAETAMGTKINAQKNPNLPYVQAVNDVTNILIKRFIHAWQRVDWIFRLTQPTEAKRQDKAIKVMHDFTENIIRERRETLVNNSKETTPEEEVNFLGQKRRMALLDVLLQSTIDGAPLSDEDIREEVDTFMFEGHDTTTSAISFCLYEISRHPEVQQRLQQEIRDVLGEDRKSPVTLRDLGELKFMENVIKESLRLHPPVPMIGRWFAEDVEIRGKHIPAGTNFTMGIFVLLRDPEYFESPDEFRPERFDADVPQIHPYAYIPFSAGPRNCIGQKFAMLEMKSTVSKLLRHFELLPLGPEPRHSMNIVLRSANGVHLGLKPRA.

Residues glutamate 311 and cysteine 449 each contribute to the heme site.

It belongs to the cytochrome P450 family. Requires heme as cofactor.

The protein resides in the endoplasmic reticulum membrane. It localises to the microsome membrane. Functionally, involved in the metabolism of insect hormones and in the breakdown of synthetic insecticides. The protein is Cytochrome P450 4d2 (Cyp4d2) of Drosophila melanogaster (Fruit fly).